A 1249-amino-acid polypeptide reads, in one-letter code: Nuclear envelope pore membrane protein POM 121 (1249 aa).

A compositionally biased stretch (low complexity) spans 1–10 (MSPAAAAAGA). The interval 1–27 (MSPAAAAAGAGERRRPIASVRDGRGRG) is disordered. The segment at 1–34 (MSPAAAAAGAGERRRPIASVRDGRGRGCGGPARA) is cisternal side. Residues 1–285 (MSPAAAAAGA…APPDRRFSRS (285 aa)) form a required for targeting to the nucleus and nuclear pore complex region. A compositionally biased stretch (basic and acidic residues) spans 11-25 (GERRRPIASVRDGRG). The helical transmembrane segment at 35-55 (VLLGLSLVGLLLYLVPAAAAL) threads the bilayer. The segment at 56 to 1249 (AWLTVGATAA…QARRQHTRKK (1194 aa)) is pore side. The residue at position 94 (Ser94) is a Phosphoserine. Disordered stretches follow at residues 136–220 (LMGS…CGTL), 319–530 (KEKK…LGYS), 602–776 (KKMQ…PVFS), 959–986 (PLPS…AKPA), and 1226–1249 (IGAG…TRKK). Residues 168 to 190 (ARPAPRSPPPRSPPPRSPPPSPP) are compositionally biased toward pro residues. A phosphoserine mark is found at Ser345, Ser351, Ser371, Ser393, and Ser396. Polar residues predominate over residues 405–423 (IPSSSRNAITSSYSSTRGI). Low complexity predominate over residues 432–445 (PSSSPFSSPASSRS). Composition is skewed to basic and acidic residues over residues 450–462 (RPAK…ELCH) and 472–486 (ADRE…DTTP). A compositionally biased stretch (polar residues) spans 491-502 (NSNSQSTPGSSG). The segment covering 635–652 (PPLGLSQSGPPGLLPSPS) has biased composition (low complexity). The segment covering 683–696 (QAETATKPQATSAP) has biased composition (polar residues). 2 stretches are compositionally biased toward low complexity: residues 712–726 (SPSS…SAPP) and 749–770 (SVTA…TAPT). The span at 1239–1249 (LQARRQHTRKK) shows a compositional bias: basic residues.

Belongs to the POM121 family.

The protein resides in the nucleus. It localises to the nuclear pore complex. Its subcellular location is the nucleus membrane. It is found in the endoplasmic reticulum membrane. Functionally, essential component of the nuclear pore complex (NPC). The repeat-containing domain may be involved in anchoring components of the pore complex to the pore membrane. When overexpressed in cells induces the formation of cytoplasmic annulate lamellae (AL). In Homo sapiens (Human), this protein is Nuclear envelope pore membrane protein POM 121 (POM121).